We begin with the raw amino-acid sequence, 238 residues long: Fatty acid metabolism regulator protein (238 aa).

The HTH gntR-type domain maps to 6 to 74 (KGPASFAEKY…HGKPTRVNNF (69 aa)). Positions 34–53 (ERELSELIGVTRTTLREVLQ) form a DNA-binding region, H-T-H motif.

In terms of assembly, homodimer.

It is found in the cytoplasm. Multifunctional regulator of fatty acid metabolism. The chain is Fatty acid metabolism regulator protein from Shewanella baltica (strain OS185).